The sequence spans 137 residues: Histone H2B (137 aa).

Over residues 1 to 10 (MAPKAADKKP) the composition is skewed to basic and acidic residues. Residues 1 to 45 (MAPKAADKKPASKAPATASKAPEKKDAGKKTAPSGDKKKRTKARK) form a disordered region. An N6-acetyllysine; alternate mark is found at Lys-8 and Lys-9. Glycyl lysine isopeptide (Lys-Gly) (interchain with G-Cter in SUMO); alternate cross-links involve residues Lys-8 and Lys-9. Ser-12 carries the post-translational modification Phosphoserine. The residue at position 13 (Lys-13) is an N6-acetyllysine. Lys-24 carries the post-translational modification N6-acetyllysine; alternate. Residue Lys-24 forms a Glycyl lysine isopeptide (Lys-Gly) (interchain with G-Cter in SUMO); alternate linkage. A Glycyl lysine isopeptide (Lys-Gly) (interchain with G-Cter in SUMO) cross-link involves residue Lys-25. Lys-131 is covalently cross-linked (Glycyl lysine isopeptide (Lys-Gly) (interchain with G-Cter in ubiquitin)).

This sequence belongs to the histone H2B family. In terms of assembly, the nucleosome is a histone octamer containing two molecules each of H2A, H2B, H3 and H4 assembled in one H3-H4 heterotetramer and two H2A-H2B heterodimers. The octamer wraps approximately 147 bp of DNA. Monoubiquitinated by the UBC2-BRE1 complex to form H2BK123ub1. H2BK123ub1 gives a specific tag for epigenetic transcriptional activation and is also prerequisite for H3K4me and H3K79me formation. H2BK123ub1 also modulates the formation of double-strand breaks during meiosis and is a prerequisite for DNA-damage checkpoint activation. In terms of processing, phosphorylated to form H2BS10ph during progression through meiotic prophase. May be correlated with chromosome condensation. Post-translationally, acetylated by GCN5 to form H2BK11ac and H2BK16ac. H2BK16ac can also be formed by ESA1. Acetylation of N-terminal lysines and particularly formation of H2BK11acK16ac has a positive effect on transcription. Sumoylation to form H2BK6su or H2BK7su, and probably also H2BK16su or H2BK17su, occurs preferentially near the telomeres and represses gene transcription.

It localises to the nucleus. It is found in the chromosome. In terms of biological role, core component of nucleosome. Nucleosomes wrap and compact DNA into chromatin, limiting DNA accessibility to the cellular machineries which require DNA as a template. Histones thereby play a central role in transcription regulation, DNA repair, DNA replication and chromosomal stability. DNA accessibility is regulated via a complex set of post-translational modifications of histones, also called histone code, and nucleosome remodeling. The chain is Histone H2B (HTB1) from Chaetomium globosum (strain ATCC 6205 / CBS 148.51 / DSM 1962 / NBRC 6347 / NRRL 1970) (Soil fungus).